Reading from the N-terminus, the 126-residue chain is Profilin-2 (126 aa).

Serine 2 carries the blocked amino end (Ser) modification. Lysine 104 carries the N6,N6,N6-trimethyllysine modification.

Belongs to the profilin family. As to quaternary structure, occurs in many kinds of cells as a complex with monomeric actin in a 1:1 ratio.

It localises to the cytoplasm. Its subcellular location is the cytoskeleton. In terms of biological role, binds to actin and affects the structure of the cytoskeleton. At high concentrations, profilin prevents the polymerization of actin, whereas it enhances it at low concentrations. By binding to PIP2, it inhibits the formation of IP3 and DG. The chain is Profilin-2 from Acanthamoeba castellanii (Amoeba).